A 142-amino-acid polypeptide reads, in one-letter code: Large ribosomal subunit protein uL11 (142 aa).

Belongs to the universal ribosomal protein uL11 family. As to quaternary structure, part of the ribosomal stalk of the 50S ribosomal subunit. Interacts with L10 and the large rRNA to form the base of the stalk. L10 forms an elongated spine to which L12 dimers bind in a sequential fashion forming a multimeric L10(L12)X complex. In terms of processing, one or more lysine residues are methylated.

In terms of biological role, forms part of the ribosomal stalk which helps the ribosome interact with GTP-bound translation factors. The sequence is that of Large ribosomal subunit protein uL11 from Rhodopseudomonas palustris (strain BisB5).